We begin with the raw amino-acid sequence, 165 residues long: MALNLQDKQAIVAEVSEVAKGALSAVVADSRGVTVDKMTELRKAGREAGVYMRVVRNTLMRRVVEGTPFECLKDTFVGPTLIAFSNEHPGAAARLFKAFAKDNANFEVKAAAFEGEVISASQIDRLATLPTYEEAIARLMSAMKEASAGKLVRTLAALRDQKEAA.

This sequence belongs to the universal ribosomal protein uL10 family. In terms of assembly, part of the ribosomal stalk of the 50S ribosomal subunit. The N-terminus interacts with L11 and the large rRNA to form the base of the stalk. The C-terminus forms an elongated spine to which L12 dimers bind in a sequential fashion forming a multimeric L10(L12)X complex.

Forms part of the ribosomal stalk, playing a central role in the interaction of the ribosome with GTP-bound translation factors. This chain is Large ribosomal subunit protein uL10, found in Sodalis glossinidius (strain morsitans).